The sequence spans 20 residues: Venom peptide Ocy8 (20 aa).

As to expression, expressed by the venom gland.

Its subcellular location is the secreted. The polypeptide is Venom peptide Ocy8 (Opisthacanthus cayaporum (South American scorpion)).